A 305-amino-acid chain; its full sequence is Oxidoreductase swnR (305 aa).

It belongs to the NmrA-type oxidoreductase family. Isoflavone reductase subfamily.

The enzyme catalyses L-pipecolate + O2 = L-1-piperideine-6-carboxylate + H2O2 + H(+). It functions in the pathway mycotoxin biosynthesis. Its function is as follows. Oxidoreductase; part of the gene cluster that mediates the biosynthesis of swainsonine (SW), a cytotoxic fungal alkaloid and a potential cancer therapy drug. Swainsonine production occurs via a multibranched pathway and is dispensable for fungal colonization of plants and infection of insect hosts. The first step of swainsonine biosynthesis is the production of the precursor pipecolic acid (PA) via conversion of L-lysine (Lys) to 1-piperideine-6-carboxylate (P6C) by the aminotransferase swnA, the latter being further reduced to PA by the reductase swnR. PA can be converted from lysine by both the SW biosynthetic cluster and the unclustered genes such as lysine cyclodeaminase. The PKS-NRPS hybrid synthetase swnK uptakes and condensates PA and malonyl-CoA with and without skipping of the ketoreductase (KR) domain in order to produce 3 intermediates, 1-oxoindolizidine, (1S)-1-hydroxyindolizin, and (1R)-1-hydroxyindolizine; with the transisomer (1S)-1-hydroxyindolizin being predominant. The terminal thioester reductase (TE) domain of swnK is involved in reduction of the thioester bond to release the intermediate aldehydes. The oxidoreductase swnN could contribute to the reduction of 1-oxoindolizidine to (1S)-1-hydroxyindolizin and (1R)-1-hydroxyindolizine, contributing to the major route of SW production. The dioxygenase swnH2 would be responsible for the oxidization of (1R)-1-hydroxyindolizine into (1R,2S)-1,2-dihydroxyindolizine and of (1S)-1-hydroxyindolizin to yield both (1R,2S)-1,2-dihydroxyindolizine and (1S,2S)-1,2-dihydroxyindolizine. The dioxygenase swnH1 then performs the conversion of the 1,2-dihydroxyindolizine epimers to SW. The protein is Oxidoreductase swnR of Metarhizium robertsii (strain ARSEF 23 / ATCC MYA-3075) (Metarhizium anisopliae (strain ARSEF 23)).